A 591-amino-acid polypeptide reads, in one-letter code: Acetyltransferase spyB (591 aa).

Residue asparagine 114 is glycosylated (N-linked (GlcNAc...) asparagine). 9 helical membrane passes run 123–143 (GTIIWTLKYVPLAASRCLIFL), 168–188 (TLLYALPFLLAQNLVPAILIL), 199–219 (LWIFWSVFVFYQWLQIPISHG), 228–248 (VGVQLFIVILQGFNLVLINPL), 309–329 (SAFLVRQAAIVAWLYLYLNCA), 383–403 (ASILSVGVGLDAPEDWPPLFG), 453–473 (IFFVFLVSGVMHVMSDLLMGI), 481–501 (ILFFCSMAVGVMIEDAVQAAW), and 529–549 (LVGFIWVCVWLSLTTPAWLCP).

This sequence belongs to the wax synthase family.

It localises to the membrane. The enzyme catalyses sartorypyrone F + acetyl-CoA = sartorypyrone G + CoA. The catalysed reaction is sartorypyrone D + acetyl-CoA = sartorypyrone A + CoA. The protein operates within secondary metabolite biosynthesis; terpenoid biosynthesis. In terms of biological role, acetyltransferase; part of the gene cluster that mediates the biosynthesis of meroterpenoids called sartorypyrones. SpyB catalyzes the last step of the pathway and is responsible for the acetylation of sartorypyrones D and F to produce sartorypyrones A and G, respectively. The biosynthesis of sartorypyrones begins with the production of triacetic acid lactone (TAL) by the NR-PKS spyA using one molecule of acetyl-CoA and two molecules of malonyl-CoA. The prenyltransferase spyF then conjugates geranylgeranyl pyrophosphate (GGPP) to TAL to form geranylgeranyl-triacetate lactone, for which the pathway-specific geranylgeranyl pyrophosphate synthase (GGPS) spyE is required to provide GGPP. Subsequently, geranylgeranyl-triacetate lactone is epoxidized at the terminal olein by the FAD-dependent monooxygenase spyC, followed by cyclization of the terpenoid component catalyzed by the terpene cyclase spyD to produce both the bicyclic sartorypyrone F and the monocyclic sartorypyrone D. Finally, the last step of the biosynthesis involves the acetylation of the meroterpenoids sartorypyrones D and F by the acetyltransferase SpyB to produce sartorypyrones A and G, respectively. This chain is Acetyltransferase spyB, found in Aspergillus fumigatus (strain ATCC MYA-4609 / CBS 101355 / FGSC A1100 / Af293) (Neosartorya fumigata).